Here is a 423-residue protein sequence, read N- to C-terminus: MLDPKILRQNLEHVVEKLRRRGFEMDSDTFLQLENKRKEAQLAIQSFQTKRNQLSKTIGMAKSKGENPEPLMAEVSQLNDELKQEEANFETIQKAFSDFQLAIPNLPHDSVPDGKSENDNREIRQWGAPPGFDFTPKDHTVLGERDNQLDFEAAAKLSGARFVVLRGSLARAHRALAQFMLDLHTDQHGYEEVYVPYLVHEECLYGTGQLPKFREEQFQVAGDRNFFLVPTGEVPLVNLARDEIIEAPALPKKWVAQTPCFRSEAGSYGKDVRGMIRQHQFQKVELVQLVQPENSYQTLEEITRQAEKVLQLLALPYRVVELCAGDLGFAAAKTYDLEVWLPSQNKYREISSCSNCEDFQARRIQARWRNPKTGKPELLHTLNGSGLAVGRTLVAVMENYQQADGHIRVPDALKSYMGGVDYF.

Residue 231 to 233 coordinates L-serine; that stretch reads TGE. 262-264 contributes to the ATP binding site; the sequence is RSE. Glutamate 285 is an L-serine binding site. ATP is bound at residue 349–352; it reads EISS. Serine 385 provides a ligand contact to L-serine.

The protein belongs to the class-II aminoacyl-tRNA synthetase family. Type-1 seryl-tRNA synthetase subfamily. In terms of assembly, homodimer. The tRNA molecule binds across the dimer.

It localises to the cytoplasm. It carries out the reaction tRNA(Ser) + L-serine + ATP = L-seryl-tRNA(Ser) + AMP + diphosphate + H(+). The catalysed reaction is tRNA(Sec) + L-serine + ATP = L-seryl-tRNA(Sec) + AMP + diphosphate + H(+). Its pathway is aminoacyl-tRNA biosynthesis; selenocysteinyl-tRNA(Sec) biosynthesis; L-seryl-tRNA(Sec) from L-serine and tRNA(Sec): step 1/1. Its function is as follows. Catalyzes the attachment of serine to tRNA(Ser). Is also able to aminoacylate tRNA(Sec) with serine, to form the misacylated tRNA L-seryl-tRNA(Sec), which will be further converted into selenocysteinyl-tRNA(Sec). The polypeptide is Serine--tRNA ligase (Coxiella burnetii (strain CbuK_Q154) (Coxiella burnetii (strain Q154))).